Here is a 181-residue protein sequence, read N- to C-terminus: NADH-quinone oxidoreductase subunit B 2 (181 aa).

The [4Fe-4S] cluster site is built by Cys-44, Cys-45, Cys-110, and Cys-139.

Belongs to the complex I 20 kDa subunit family. NDH-1 is composed of 14 different subunits. Subunits NuoB, C, D, E, F, and G constitute the peripheral sector of the complex. [4Fe-4S] cluster serves as cofactor.

The protein localises to the cell inner membrane. The catalysed reaction is a quinone + NADH + 5 H(+)(in) = a quinol + NAD(+) + 4 H(+)(out). In terms of biological role, NDH-1 shuttles electrons from NADH, via FMN and iron-sulfur (Fe-S) centers, to quinones in the respiratory chain. The immediate electron acceptor for the enzyme in this species is believed to be a menaquinone. Couples the redox reaction to proton translocation (for every two electrons transferred, four hydrogen ions are translocated across the cytoplasmic membrane), and thus conserves the redox energy in a proton gradient. This Cytophaga hutchinsonii (strain ATCC 33406 / DSM 1761 / CIP 103989 / NBRC 15051 / NCIMB 9469 / D465) protein is NADH-quinone oxidoreductase subunit B 2.